The chain runs to 220 residues: Polyadenylate-binding protein 2 (220 aa).

Residues 1–24 (MEEEEHEVYGGEIPDVGEMDGDME) form a disordered region. Positions 34 to 74 (AADDDAVKELDEMKKRLKEMEDEAAALREMQAKVEKEMGAQ) form a coiled coil. The tract at residues 78-219 (SIAANQAGKE…FRRPMRYMPY (142 aa)) is necessary for homooligomerization. The region spanning 92–168 (RSVFVGNVDY…RQLKVLQKRT (77 aa)) is the RRM domain. The Nuclear localization signal motif lies at 165–172 (QKRTNVPG).

In terms of assembly, monomer and homooligomer. Binds RNA as a monomer and oligomerizes when bound to poly(A). Forms a complex with cleavage and polyadenylation specificity factor (CPSF) subunits PAPS2, FIPS5, PABN3 and PABN1. Interacts with CSP3.

It localises to the nucleus speckle. It is found in the cytoplasm. Functionally, involved in the 3'-end formation of mRNA precursors (pre-mRNA) by the addition of a poly(A) tail of 200-250 nt to the upstream cleavage product. Stimulates poly(A) polymerase (PAPOLA) conferring processivity on the poly(A) tail elongation reaction and also controls the poly(A) tail length. Increases the affinity of poly(A) polymerase for RNA. Binds to poly(A) and to poly(G) with high affinity. May protect the poly(A) tail from degradation. This Arabidopsis thaliana (Mouse-ear cress) protein is Polyadenylate-binding protein 2.